The sequence spans 484 residues: tRNA-2-methylthio-N(6)-dimethylallyladenosine synthase (484 aa).

One can recognise an MTTase N-terminal domain in the interval 29 to 149 (GVFHIHTLGC…LPKLLDQNRA (121 aa)). 6 residues coordinate [4Fe-4S] cluster: C38, C78, C112, C186, C190, and C193. The 230-residue stretch at 172–401 (RASRISSWVA…VALQEQITEE (230 aa)) folds into the Radical SAM core domain. Residues 404 to 474 (ATFEGRDVEV…RHNLLADPDV (71 aa)) form the TRAM domain.

It belongs to the methylthiotransferase family. MiaB subfamily. Monomer. [4Fe-4S] cluster serves as cofactor.

It is found in the cytoplasm. It carries out the reaction N(6)-dimethylallyladenosine(37) in tRNA + (sulfur carrier)-SH + AH2 + 2 S-adenosyl-L-methionine = 2-methylsulfanyl-N(6)-dimethylallyladenosine(37) in tRNA + (sulfur carrier)-H + 5'-deoxyadenosine + L-methionine + A + S-adenosyl-L-homocysteine + 2 H(+). Its function is as follows. Catalyzes the methylthiolation of N6-(dimethylallyl)adenosine (i(6)A), leading to the formation of 2-methylthio-N6-(dimethylallyl)adenosine (ms(2)i(6)A) at position 37 in tRNAs that read codons beginning with uridine. The chain is tRNA-2-methylthio-N(6)-dimethylallyladenosine synthase from Bifidobacterium longum (strain DJO10A).